A 232-amino-acid polypeptide reads, in one-letter code: Phosphatidylserine decarboxylase proenzyme (232 aa).

Residue serine 190 is the Schiff-base intermediate with substrate; via pyruvic acid of the active site. Serine 190 is modified (pyruvic acid (Ser); by autocatalysis).

The protein belongs to the phosphatidylserine decarboxylase family. PSD-A subfamily. Heterodimer of a large membrane-associated beta subunit and a small pyruvoyl-containing alpha subunit. Pyruvate serves as cofactor. Is synthesized initially as an inactive proenzyme. Formation of the active enzyme involves a self-maturation process in which the active site pyruvoyl group is generated from an internal serine residue via an autocatalytic post-translational modification. Two non-identical subunits are generated from the proenzyme in this reaction, and the pyruvate is formed at the N-terminus of the alpha chain, which is derived from the carboxyl end of the proenzyme. The post-translation cleavage follows an unusual pathway, termed non-hydrolytic serinolysis, in which the side chain hydroxyl group of the serine supplies its oxygen atom to form the C-terminus of the beta chain, while the remainder of the serine residue undergoes an oxidative deamination to produce ammonia and the pyruvoyl prosthetic group on the alpha chain.

The protein resides in the cell membrane. The enzyme catalyses a 1,2-diacyl-sn-glycero-3-phospho-L-serine + H(+) = a 1,2-diacyl-sn-glycero-3-phosphoethanolamine + CO2. Its pathway is phospholipid metabolism; phosphatidylethanolamine biosynthesis; phosphatidylethanolamine from CDP-diacylglycerol: step 2/2. Catalyzes the formation of phosphatidylethanolamine (PtdEtn) from phosphatidylserine (PtdSer). The polypeptide is Phosphatidylserine decarboxylase proenzyme (Rhizobium johnstonii (strain DSM 114642 / LMG 32736 / 3841) (Rhizobium leguminosarum bv. viciae)).